A 129-amino-acid chain; its full sequence is Small ribosomal subunit protein uS9 (129 aa).

This sequence belongs to the universal ribosomal protein uS9 family.

This chain is Small ribosomal subunit protein uS9 (rpsI), found in Treponema pallidum (strain Nichols).